A 770-amino-acid chain; its full sequence is Nucleus-vacuole junction protein 2 (770 aa).

Over 1–5 (MASLK) the chain is Cytoplasmic. The helical; Signal-anchor for type II membrane protein transmembrane segment at 6–26 (VFLAVYLLGGITFLPLVLFTL) threads the bilayer. The Lumenal portion of the chain corresponds to 27-770 (YKIHLLYSNL…EFEEQREPKL (744 aa)). Residues 114–266 (TALQEQILQR…WYYQLINASK (153 aa)) enclose the PH domain. Residues N228, N263, N279, N300, N391, N528, and N529 are each glycosylated (N-linked (GlcNAc...) asparagine). An SMP-LTD domain is found at 304–504 (NQLTTKWLNA…YPTPNEVYRG (201 aa)). 3 disordered regions span residues 541-566 (EGGM…LKDL), 578-600 (TQTT…TKSR), and 615-770 (KDNV…EPKL). Over residues 554–566 (LRPERKKENLKDL) the composition is skewed to basic and acidic residues. Residues 587-596 (NDDVSSSENS) are compositionally biased toward polar residues. N-linked (GlcNAc...) asparagine glycans are attached at residues N595 and N620. Phosphoserine occurs at positions 640 and 669. Positions 679–688 (LEGRKEKDTE) are enriched in basic and acidic residues. An N-linked (GlcNAc...) asparagine glycan is attached at N700. Composition is skewed to polar residues over residues 713–725 (FSVS…NSLK) and 736–751 (LESS…QNRF). S717 is modified (phosphoserine). N718 carries N-linked (GlcNAc...) asparagine glycosylation. Phosphoserine is present on residues S720 and S723. Residues 756-770 (FKQDLEFEEQREPKL) are compositionally biased toward basic and acidic residues.

The protein resides in the endoplasmic reticulum membrane. The protein localises to the nucleus membrane. During endoplasmic reticulum (ER) stress or when cellular ceramide levels increase, induces contacts between the ER and medial-Golgi complex to facilitate non-vesicular transport of ceramides from the ER to the Golgi complex where they are converted to complex sphingolipids, preventing toxic ceramide accumulation. The protein is Nucleus-vacuole junction protein 2 of Saccharomyces cerevisiae (strain ATCC 204508 / S288c) (Baker's yeast).